The primary structure comprises 357 residues: Putative minor fimbrial subunit PmfE (357 aa).

A signal peptide spans 1-28 (MILNKKNIHSKSVMLFCAGIVSLMPLHA).

The protein localises to the fimbrium. The sequence is that of Putative minor fimbrial subunit PmfE (pmfE) from Proteus mirabilis (strain HI4320).